The following is a 126-amino-acid chain: Small ribosomal subunit protein eS8 (126 aa).

The segment covering 1–10 (MAIWQGSSLR) has biased composition (polar residues). The interval 1 to 35 (MAIWQGSSLRKPSGARSRRNKNKRNAEFGRNPAET) is disordered.

The protein belongs to the eukaryotic ribosomal protein eS8 family. As to quaternary structure, part of the 30S ribosomal subunit.

In Methanosphaera stadtmanae (strain ATCC 43021 / DSM 3091 / JCM 11832 / MCB-3), this protein is Small ribosomal subunit protein eS8.